The following is a 268-amino-acid chain: Calpain small subunit 1 (268 aa).

Position 1 is an N-acetylmethionine (Met-1). Ser-6 is subject to Phosphoserine. Residues 96–130 (EEVRQFRKLFVQLAGDDMEVSATELMNILNKVVTR) form the EF-hand 1; atypical domain. Residues Ala-109, Asp-112, Glu-114, Glu-119, Asp-137, Asp-152, Asp-154, Thr-156, Lys-158, and Glu-163 each contribute to the Ca(2+) site. 4 consecutive EF-hand domains span residues 139-172 (FGID…NNIK), 169-204 (NNIK…AGFH), 205-233 (LNEH…ISCL), and 234-268 (VRLD…TMYS). The residue at position 179 (Lys-179) is an N6-acetyllysine. Ca(2+) contacts are provided by Asp-182, Asp-184, Ser-186, Thr-188, Glu-193, and Asp-225.

As to quaternary structure, homodimer or heterodimer of a large (catalytic) and a small (regulatory) subunit. In presence of calcium, the heterodimer dissociates.

It is found in the cytoplasm. Its subcellular location is the cell membrane. Functionally, regulatory subunit of the calcium-regulated non-lysosomal thiol-protease which catalyzes limited proteolysis of substrates involved in cytoskeletal remodeling and signal transduction. Essential for embryonic development. The sequence is that of Calpain small subunit 1 (Capns1) from Mus musculus (Mouse).